The primary structure comprises 90 residues: Mitochondrial import inner membrane translocase subunit Tim8 A (90 aa).

Residues 36 to 59 carry the Twin CX3C motif motif; the sequence is CWDKCMDKPGPKLDSRAEMCFVNC. Disulfide bonds link C36/C59 and C40/C55.

It belongs to the small Tim family. As to quaternary structure, heterohexamer; composed of 3 copies of TIMM8A and 3 copies of TIMM13, named soluble 70 kDa complex. Associates with the TIM22 complex, whose core is composed of TIMM22.

The protein localises to the mitochondrion inner membrane. Functionally, mitochondrial intermembrane chaperone that participates in the import and insertion of some multi-pass transmembrane proteins into the mitochondrial inner membrane. Also required for the transfer of beta-barrel precursors from the TOM complex to the sorting and assembly machinery (SAM complex) of the outer membrane. Acts as a chaperone-like protein that protects the hydrophobic precursors from aggregation and guide them through the mitochondrial intermembrane space. The TIMM8-TIMM13 complex mediates the import of some proteins while the predominant TIMM9-TIMM10 70 kDa complex mediates the import of much more proteins. The protein is Mitochondrial import inner membrane translocase subunit Tim8 A (timm8a) of Takifugu rubripes (Japanese pufferfish).